Consider the following 143-residue polypeptide: Holo-[acyl-carrier-protein] synthase (143 aa).

Mg(2+)-binding residues include Asp9 and Glu63.

This sequence belongs to the P-Pant transferase superfamily. AcpS family. It depends on Mg(2+) as a cofactor.

The protein localises to the cytoplasm. It catalyses the reaction apo-[ACP] + CoA = holo-[ACP] + adenosine 3',5'-bisphosphate + H(+). Functionally, transfers the 4'-phosphopantetheine moiety from coenzyme A to a Ser of acyl-carrier-protein. The sequence is that of Holo-[acyl-carrier-protein] synthase from Burkholderia mallei (strain NCTC 10247).